The chain runs to 296 residues: MVCKALITLCIFAAGLRVQGSPTPTLLPVSLTTKSTAPMATWTTSAQHTAMATTPVASATHNASVLRTTAASLTSQLPTHPREEAVTSPPLKREVNSTDSSPTGFSSNSSGIHLAPTPEEHSLGSPETSVPATGSQSPTLLFSQGPTSASTSPATSPSEPLSASVTSNHSSTVNNIQPTGAPMAPASPTEEHSSSHTPTSHVTEPVPKEKSPQDTEPGKVICESETTTPFLIMQEVENALSSGSIAAITVTVIAVVLLVFGAAAYLKIRHSSYGRLLDDHDYGSWGNYNNPLYDDS.

Residues 1 to 20 form the signal peptide; it reads MVCKALITLCIFAAGLRVQG. At 21–244 the chain is on the extracellular side; sequence SPTPTLLPVS…EVENALSSGS (224 aa). Residues Asn-62, Asn-96, and Asn-108 are each glycosylated (N-linked (GlcNAc...) asparagine). A disordered region spans residues 73–220; the sequence is LTSQLPTHPR…SPQDTEPGKV (148 aa). A compositionally biased stretch (basic and acidic residues) spans 80–96; it reads HPREEAVTSPPLKREVN. A compositionally biased stretch (low complexity) spans 97-111; it reads STDSSPTGFSSNSSG. A compositionally biased stretch (polar residues) spans 125–145; sequence SPETSVPATGSQSPTLLFSQG. 2 stretches are compositionally biased toward low complexity: residues 146–175 and 195–205; these read PTSASTSPATSPSEPLSASVTSNHSSTVNN and SHTPTSHVTEP. Residue Asn-168 is glycosylated (N-linked (GlcNAc...) asparagine). Basic and acidic residues predominate over residues 206–217; sequence VPKEKSPQDTEP. The helical transmembrane segment at 245 to 265 threads the bilayer; sequence IAAITVTVIAVVLLVFGAAAY. Over 266–296 the chain is Cytoplasmic; it reads LKIRHSSYGRLLDDHDYGSWGNYNNPLYDDS. The residue at position 284 (Ser-284) is a Phosphoserine.

Belongs to the PARM family. Highly N-glycosylated and O-glycosylated. As to expression, expressed in prostate. Detected in other organs at low levels, these include the heart and various tissues of the urogenital tract. Not detected in mammary gland.

It localises to the cell membrane. The protein resides in the golgi apparatus membrane. The protein localises to the endosome membrane. In terms of biological role, may regulate TLP1 expression and telomerase activity, thus enabling certain prostatic cells to resist apoptosis. This Rattus norvegicus (Rat) protein is Prostate androgen-regulated mucin-like protein 1 homolog (Parm1).